Reading from the N-terminus, the 307-residue chain is MNHATSELHDESAVTSVPETTRLQDLKALVKMGIVNSNTLTVFTGFWLALHFNGLSVMDNLDKLFFTIVGSGLVMAGVCCLNNYIDRDIDPLMERTKTRPTVTGKYKPGFALTFGLVILLLGFVFLLLTTPMAVLMGFIGAFTYVVLYSLWTKRKYTLNTVVGSISGAVPPLIGWAAIDPSLGHPIAWMLFLIMFIWQIPHFLALAMKRVDEYRNAGIPMLPVVHGFEITKRQIMIWTVCLLPLPFYMSGLGITFMVIATLLNIGWIVLGFYGFRKKDDIKWSVQMFVYSLNYLTILFVSMIVVTFF.

The next 8 helical transmembrane spans lie at Met-32–Phe-52, Phe-65–Ile-85, Pro-108–Leu-128, Pro-131–Trp-151, Leu-158–Ile-178, Ile-186–Ala-206, Leu-251–Phe-271, and Phe-287–Phe-307.

Belongs to the UbiA prenyltransferase family. Protoheme IX farnesyltransferase subfamily. Interacts with CtaA.

Its subcellular location is the cell membrane. It catalyses the reaction heme b + (2E,6E)-farnesyl diphosphate + H2O = Fe(II)-heme o + diphosphate. The protein operates within porphyrin-containing compound metabolism; heme O biosynthesis; heme O from protoheme: step 1/1. Its function is as follows. Converts heme B (protoheme IX) to heme O by substitution of the vinyl group on carbon 2 of heme B porphyrin ring with a hydroxyethyl farnesyl side group. This Bacillus cereus (strain ATCC 10987 / NRS 248) protein is Protoheme IX farnesyltransferase.